Here is a 202-residue protein sequence, read N- to C-terminus: Imidazole glycerol phosphate synthase subunit HisH (202 aa).

The Glutamine amidotransferase type-1 domain occupies 3 to 202 (RIVIIDYGLG…KILRNFVEMC (200 aa)). The active-site Nucleophile is cysteine 79. Catalysis depends on residues histidine 183 and glutamate 185.

Heterodimer of HisH and HisF.

It localises to the cytoplasm. It carries out the reaction 5-[(5-phospho-1-deoxy-D-ribulos-1-ylimino)methylamino]-1-(5-phospho-beta-D-ribosyl)imidazole-4-carboxamide + L-glutamine = D-erythro-1-(imidazol-4-yl)glycerol 3-phosphate + 5-amino-1-(5-phospho-beta-D-ribosyl)imidazole-4-carboxamide + L-glutamate + H(+). The catalysed reaction is L-glutamine + H2O = L-glutamate + NH4(+). It functions in the pathway amino-acid biosynthesis; L-histidine biosynthesis; L-histidine from 5-phospho-alpha-D-ribose 1-diphosphate: step 5/9. IGPS catalyzes the conversion of PRFAR and glutamine to IGP, AICAR and glutamate. The HisH subunit catalyzes the hydrolysis of glutamine to glutamate and ammonia as part of the synthesis of IGP and AICAR. The resulting ammonia molecule is channeled to the active site of HisF. The polypeptide is Imidazole glycerol phosphate synthase subunit HisH (Methanosarcina mazei (strain ATCC BAA-159 / DSM 3647 / Goe1 / Go1 / JCM 11833 / OCM 88) (Methanosarcina frisia)).